The sequence spans 320 residues: D-alanine--D-alanine ligase (320 aa).

Positions 101–317 (KMIFQGAGLP…FSELVCKILS (217 aa)) constitute an ATP-grasp domain. An ATP-binding site is contributed by 148 to 203 (INQLGLPLIVKPSREGSSFGMTKVEHLDQLDDALKKAWHYDEEILVEKWHFGTELT). Positions 271, 284, and 286 each coordinate Mg(2+).

It belongs to the D-alanine--D-alanine ligase family. Requires Mg(2+) as cofactor. The cofactor is Mn(2+).

It localises to the cytoplasm. The enzyme catalyses 2 D-alanine + ATP = D-alanyl-D-alanine + ADP + phosphate + H(+). It functions in the pathway cell wall biogenesis; peptidoglycan biosynthesis. Cell wall formation. The polypeptide is D-alanine--D-alanine ligase (Hamiltonella defensa subsp. Acyrthosiphon pisum (strain 5AT)).